A 46-amino-acid chain; its full sequence is Myoregulin (46 aa).

Topologically, residues 1 to 21 (MSGKSWVLISTTSPQSLEDEI) are cytoplasmic. Residues 22-42 (LGRLLKILFVLFVDLMSIMYV) form a helical membrane-spanning segment. Topologically, residues 43 to 46 (VITS) are lumenal.

As to quaternary structure, homooligomer. Monomer. Interacts with ATP2A1/SERCA1. Interacts as a monomer with ATP2A2/SERCA2; the interaction inhibits ATP2A2 activity. In terms of tissue distribution, specifically expressed in all skeletal muscles. Detected in both fast- and slow-type skeletal muscle. Not expressed in cardiac or smooth muscles.

It is found in the sarcoplasmic reticulum membrane. Functionally, inhibits the activity of ATP2A1/SERCA1 ATPase in sarcoplasmic reticulum by decreasing the apparent affinity of the ATPase for Ca(2+), thereby acting as a key regulator of skeletal muscle activity. Its high expression in adult skeletal muscle, suggests that it constitutes the predominant regulator of ATP2A1/SERCA1 in adult skeletal muscle. Also inhibits the activity of ATP2A2/SERCA2 and ATP2A3/SERCA3. The chain is Myoregulin from Mus musculus (Mouse).